Reading from the N-terminus, the 928-residue chain is Eukaryotic translation initiation factor 3 subunit C (928 aa).

Disordered regions lie at residues 1-37 (MSRF…SDDE) and 157-286 (FREA…EDGE). Acidic residues predominate over residues 11-20 (SESESSEEEV). The span at 22–33 (TQFNNKAQNFQF) shows a compositional bias: polar residues. Phosphoserine is present on residues serine 34, serine 165, serine 177, and serine 186. The segment covering 162–171 (DQESDVDEGE) has biased composition (acidic residues). The span at 172–184 (GDVHDSDADRAGD) shows a compositional bias: basic and acidic residues. Residues 215–240 (DDDDSEDSIDWDPDTESETESSEDEN) are compositionally biased toward acidic residues. Basic and acidic residues predominate over residues 245–264 (MRERFLKRTTEKEDKDDDKR). Residues 265–277 (KDKRKEQKHKVRK) show a composition bias toward basic residues. The 177-residue stretch at 656 to 832 (FHMHINLELL…ETVVMHRSEP (177 aa)) folds into the PCI domain. Residues 864 to 928 (FFQRGNMGNR…QQQVHTIDEE (65 aa)) form a disordered region. Positions 898–909 (QRNRNQRGHHKQ) are enriched in basic residues. The segment covering 910–921 (NQQQNQQQQQQQ) has biased composition (low complexity).

It belongs to the eIF-3 subunit C family. Component of the eukaryotic translation initiation factor 3 (eIF-3) complex. The eIF-3 complex interacts with pix.

It localises to the cytoplasm. In terms of biological role, component of the eukaryotic translation initiation factor 3 (eIF-3) complex, which is involved in protein synthesis of a specialized repertoire of mRNAs and, together with other initiation factors, stimulates binding of mRNA and methionyl-tRNAi to the 40S ribosome. The eIF-3 complex specifically targets and initiates translation of a subset of mRNAs involved in cell proliferation. In Drosophila grimshawi (Hawaiian fruit fly), this protein is Eukaryotic translation initiation factor 3 subunit C.